The primary structure comprises 415 residues: Lipid-A-disaccharide synthase (415 aa).

Positions 1 to 21 are disordered; the sequence is MNSLPESGSDGQSSADPSQKA.

This sequence belongs to the LpxB family.

The enzyme catalyses a lipid X + a UDP-2-N,3-O-bis[(3R)-3-hydroxyacyl]-alpha-D-glucosamine = a lipid A disaccharide + UDP + H(+). The protein operates within bacterial outer membrane biogenesis; LPS lipid A biosynthesis. Functionally, condensation of UDP-2,3-diacylglucosamine and 2,3-diacylglucosamine-1-phosphate to form lipid A disaccharide, a precursor of lipid A, a phosphorylated glycolipid that anchors the lipopolysaccharide to the outer membrane of the cell. The protein is Lipid-A-disaccharide synthase of Gluconobacter oxydans (strain 621H) (Gluconobacter suboxydans).